The chain runs to 629 residues: tRNA uridine 5-carboxymethylaminomethyl modification enzyme MnmG (629 aa).

4–9 provides a ligand contact to FAD; sequence GGGHAG. 268 to 282 serves as a coordination point for NAD(+); it reads GPRYCPSIEDKVNRF.

Belongs to the MnmG family. In terms of assembly, homodimer. Heterotetramer of two MnmE and two MnmG subunits. The cofactor is FAD.

It is found in the cytoplasm. Its function is as follows. NAD-binding protein involved in the addition of a carboxymethylaminomethyl (cmnm) group at the wobble position (U34) of certain tRNAs, forming tRNA-cmnm(5)s(2)U34. The chain is tRNA uridine 5-carboxymethylaminomethyl modification enzyme MnmG from Helicobacter hepaticus (strain ATCC 51449 / 3B1).